The chain runs to 153 residues: CRIB domain-containing protein RIC4 (153 aa).

A CRIB domain is found at 99-112 (IGVPTNVKHVSHIG).

Interacts with ARAC4/ROP2 and ARAC11/ROP1. Expressed in roots, leaves, stems, flowers, siliques and pollen.

The protein resides in the cell membrane. Its function is as follows. Functions as a downstream effector of Rho-related GTP binding proteins of the 'Rho of Plants' (ROPs) family. Participates in the propagation of ROP GTPase signals in specific cellular responses. Required for actin cortical microfilament assembly. Activated by ARAC4/ROP2 to promote the assembly of cortical actin microfilaments required for lobe formation and lateral expansion of pavement cells. Interaction with, and activation by ARAC4/ROP2 is inhibited by RIC1. Functions as a downstream effector of ARAC11/ROP1 to promote the assembly of apical F-actin associated with vesicle accumulation in the tip of the growing pollen tube. Counteracts the ARAC11/ROP1-RIC3 pathway, which activates calcium signaling that leads to apical F-actin disassembly associated with exocytosis, to control actin dynamics and pollen tube apical growth. Downstream of ARAC11/ROP1, is involved in the growth responses to the root-colonizing endophytic fungus P.indica. In Arabidopsis thaliana (Mouse-ear cress), this protein is CRIB domain-containing protein RIC4 (RIC4).